A 199-amino-acid chain; its full sequence is UPF0301 protein Ajs_3573 (199 aa).

The protein belongs to the UPF0301 (AlgH) family.

This is UPF0301 protein Ajs_3573 from Acidovorax sp. (strain JS42).